Here is an 80-residue protein sequence, read N- to C-terminus: Putative antitoxin VapB44 (80 aa).

Positions 40–68 are disordered; sequence NQNPQPAASQEDAFHGFEPLPHRGGAVSN.

Possibly the antitoxin component of a type II toxin-antitoxin (TA) system. Its cognate toxin is VapC44 (Potential). The protein is Putative antitoxin VapB44 (vapB44) of Mycobacterium tuberculosis (strain CDC 1551 / Oshkosh).